Reading from the N-terminus, the 354-residue chain is Neutral protease 2 homolog SNOG_02177 (354 aa).

The N-terminal stretch at 1-19 (MKFQILSVAALASLASAVS) is a signal peptide. Positions 20 to 182 (DALDKRDSPL…WIDLAKRTIV (163 aa)) are excised as a propeptide. Cystine bridges form between Cys-186–Cys-257 and Cys-264–Cys-282. Asn-214 carries an N-linked (GlcNAc...) asparagine glycan. Residue His-306 coordinates Zn(2+). Glu-307 is an active-site residue. A Zn(2+)-binding site is contributed by His-310.

This sequence belongs to the peptidase M35 family. Requires Zn(2+) as cofactor.

It localises to the secreted. It catalyses the reaction Preferential cleavage of bonds with hydrophobic residues in P1'. Also 3-Asn-|-Gln-4 and 8-Gly-|-Ser-9 bonds in insulin B chain.. Secreted metalloproteinase that allows assimilation of proteinaceous substrates. Shows high activities on basic nuclear substrates such as histone and protamine. The protein is Neutral protease 2 homolog SNOG_02177 of Phaeosphaeria nodorum (strain SN15 / ATCC MYA-4574 / FGSC 10173) (Glume blotch fungus).